The primary structure comprises 144 residues: Large ribosomal subunit protein uL15 (144 aa).

The interval 1–53 (MRLNTLSPADGSKHAPKRLGRGIGSGLGKTGGRGHKGQNSRSGGGVRRGFEGG) is disordered. Over residues 21–31 (RGIGSGLGKTG) the composition is skewed to gly residues.

This sequence belongs to the universal ribosomal protein uL15 family. In terms of assembly, part of the 50S ribosomal subunit.

Functionally, binds to the 23S rRNA. This is Large ribosomal subunit protein uL15 from Erwinia tasmaniensis (strain DSM 17950 / CFBP 7177 / CIP 109463 / NCPPB 4357 / Et1/99).